The primary structure comprises 213 residues: Phosphatidylethanolamine N-methyltransferase A (213 aa).

Over 1–21 (MIVEHAIDYIDYLMNYVDFTE) the chain is Lumenal. The segment at residues 22-42 (KYFLLTIACVVFNPTWWNITA) is an intramembrane region (helical). Over 43–54 (RMEYKTKFMTKI) the chain is Lumenal. A helical transmembrane segment spans residues 55 to 75 (CGSKENGCYLLAFLIFSLGIL). Residues 76 to 102 (RDWLFSEALIRQPIFQEFDRFEVEVLS) are Cytoplasmic-facing. The chain crosses the membrane as a helical span at residues 103–123 (YILYGFGGILVLAAYLKLGIT). 107 to 109 (GFG) is an S-adenosyl-L-methionine binding site. At 124–166 (GTYLGDYFGILMKERVTGFPFNVMNNPMYNGSVMLFIAHALSY) the chain is on the lumenal side. The chain crosses the membrane as a helical span at residues 167 to 187 (KSVAGLVLSFVVYVVYKFALI). At 188-213 (FEESFTNYIYSTAAANAAKKNKSKSK) the chain is on the cytoplasmic side. Position 189–190 (189–190 (EE)) interacts with S-adenosyl-L-methionine.

It belongs to the class VI-like SAM-binding methyltransferase superfamily. PEMT/PEM2 methyltransferase family.

Its subcellular location is the endoplasmic reticulum membrane. It is found in the mitochondrion membrane. It carries out the reaction a 1,2-diacyl-sn-glycero-3-phospho-N-methylethanolamine + S-adenosyl-L-methionine = a 1,2-diacyl-sn-glycero-3-phospho-N,N-dimethylethanolamine + S-adenosyl-L-homocysteine + H(+). The catalysed reaction is a 1,2-diacyl-sn-glycero-3-phospho-N,N-dimethylethanolamine + S-adenosyl-L-methionine = a 1,2-diacyl-sn-glycero-3-phosphocholine + S-adenosyl-L-homocysteine + H(+). It catalyses the reaction a 1,2-diacyl-sn-glycero-3-phosphoethanolamine + S-adenosyl-L-methionine = a 1,2-diacyl-sn-glycero-3-phospho-N-methylethanolamine + S-adenosyl-L-homocysteine + H(+). The protein operates within phospholipid metabolism; phosphatidylcholine biosynthesis. Catalyzes the three sequential steps of the methylation pathway of phosphatidylcholine biosynthesis, the SAM-dependent methylation of phosphatidylethanolamine (PE) to phosphatidylmonomethylethanolamine (PMME), PMME to phosphatidyldimethylethanolamine (PDME), and PDME to phosphatidylcholine (PC). The protein is Phosphatidylethanolamine N-methyltransferase A (pemtA) of Dictyostelium discoideum (Social amoeba).